The primary structure comprises 277 residues: MDYIIELIKYIILGIIQGVTEIFPVSSSGHLVLFSNLFLGGEDINATLTLFLMITNMGSFLALLIYYFKDVKELVVDSFNFVFNKEKRKEIIVQENISYAVKLIIAIVPIGIAGLLIKDYLPTNLLSIGISLIITSLLLFLVFLLRNKKFSNDITFKNAGVIGLIQMFAVFPGISRSGITLVGGLSQKIEIKKVMRFSFLCYLLISIPVSGLGLYDAIKNPGTMSDIPGFSLAFIFSFIFSLLTIKIMHKYVTVKNLIWFSLYALTVGLVSITLYII.

7 helical membrane-spanning segments follow: residues 3-23 (YIIE…TEIF), 48-68 (LTLF…IYYF), 97-117 (ISYA…GLLI), 125-145 (LLSI…VFLL), 198-218 (SFLC…YDAI), 227-247 (IPGF…TIKI), and 257-277 (LIWF…LYII).

Belongs to the UppP family.

Its subcellular location is the cell membrane. It carries out the reaction di-trans,octa-cis-undecaprenyl diphosphate + H2O = di-trans,octa-cis-undecaprenyl phosphate + phosphate + H(+). Its function is as follows. Catalyzes the dephosphorylation of undecaprenyl diphosphate (UPP). Confers resistance to bacitracin. The protein is Undecaprenyl-diphosphatase of Acholeplasma laidlawii (strain PG-8A).